The sequence spans 113 residues: Large ribosomal subunit protein uL22 (113 aa).

The protein belongs to the universal ribosomal protein uL22 family. Part of the 50S ribosomal subunit.

Its function is as follows. This protein binds specifically to 23S rRNA; its binding is stimulated by other ribosomal proteins, e.g. L4, L17, and L20. It is important during the early stages of 50S assembly. It makes multiple contacts with different domains of the 23S rRNA in the assembled 50S subunit and ribosome. In terms of biological role, the globular domain of the protein is located near the polypeptide exit tunnel on the outside of the subunit, while an extended beta-hairpin is found that lines the wall of the exit tunnel in the center of the 70S ribosome. This is Large ribosomal subunit protein uL22 from Thermus thermophilus (strain ATCC BAA-163 / DSM 7039 / HB27).